The primary structure comprises 338 residues: Methionyl-tRNA formyltransferase (338 aa).

Residue 110 to 113 (SLLP) coordinates (6S)-5,6,7,8-tetrahydrofolate.

Belongs to the Fmt family.

The enzyme catalyses L-methionyl-tRNA(fMet) + (6R)-10-formyltetrahydrofolate = N-formyl-L-methionyl-tRNA(fMet) + (6S)-5,6,7,8-tetrahydrofolate + H(+). Functionally, attaches a formyl group to the free amino group of methionyl-tRNA(fMet). The formyl group appears to play a dual role in the initiator identity of N-formylmethionyl-tRNA by promoting its recognition by IF2 and preventing the misappropriation of this tRNA by the elongation apparatus. The polypeptide is Methionyl-tRNA formyltransferase (Synechococcus sp. (strain CC9902)).